Reading from the N-terminus, the 87-residue chain is Small ribosomal subunit protein uS12m (87 aa).

Belongs to the universal ribosomal protein uS12 family.

The protein localises to the mitochondrion matrix. The protein resides in the kinetoplast. In terms of biological role, protein S12 is involved in the translation initiation step. In Trypanoplasma borreli, this protein is Small ribosomal subunit protein uS12m (RPS12).